The chain runs to 1061 residues: E3 SUMO-protein ligase ZNF451 (1061 aa).

The disordered stretch occupies residues 1 to 38 (MGDPGSEIIESVPPAGPEASESTTDENEDDIQFVSEGP). The tract at residues 1-246 (MGDPGSEIIE…TDDGHNNNLL (246 aa)) is sufficient for E3 SUMO-protein ligase activity. The important for interaction with SUMO1 and SUMO2 stretch occupies residues 1 to 344 (MGDPGSEIIE…RVHCRNAGPV (344 aa)). The interval 30 to 37 (DIQFVSEG) is interaction with SUMO2 1. A PLRP motif is present at residues 38 to 41 (PLRP). The segment at 42–50 (VLEYIDLVS) is interaction with SUMO2 2. Glycyl lysine isopeptide (Lys-Gly) (interchain with G-Cter in SUMO2) cross-links involve residues Lys-75, Lys-77, Lys-106, Ile-121, Ala-130, Leu-138, Lys-139, Lys-144, and Lys-153. Ser-155 bears the Phosphoserine mark. An Omega-N-methylarginine modification is found at Arg-158. Glycyl lysine isopeptide (Lys-Gly) (interchain with G-Cter in SUMO2) cross-links involve residues Val-164 and Lys-167. The interval 168–525 (PILCPIMHCN…HMSRIHGGAH (358 aa)) is important for interaction with SMAD4. The C2H2-type 1 zinc-finger motif lies at 169–195 (ILCPIMHCNKEFDNGHLLLGHLKRFDH). Residues Gln-226, Gly-240, Pro-247, Ser-263, Lys-270, Lys-275, Lys-283, Asp-286, Lys-288, Pro-293, Lys-301, and Lys-309 each participate in a glycyl lysine isopeptide (Lys-Gly) (interchain with G-Cter in SUMO2) cross-link. The segment at 253–277 (FACPNCFLLFSRKEECSKHMSGKNH) adopts a C2H2-type 2 zinc-finger fold. The segment at 315–337 (VKCVACHKTLRSHMELTAHFRVH) adopts a C2H2-type 3 zinc-finger fold. Lys-357 participates in a covalent cross-link: Glycyl lysine isopeptide (Lys-Gly) (interchain with G-Cter in SUMO2). The segment at 362–386 (GYCPDCNQVFVDETSTQNHKQNSGH) adopts a C2H2-type 4 zinc-finger fold. Lys-423 is covalently cross-linked (Glycyl lysine isopeptide (Lys-Gly) (interchain with G-Cter in SUMO2)). At Ser-432 the chain carries Phosphoserine. Residues Lys-434, Lys-446, Lys-452, Lys-454, Lys-464, Phe-473, Val-490, Cys-500, Lys-505, Asp-508, Gly-522, Trp-532, Lys-543, and Lys-585 each participate in a glycyl lysine isopeptide (Lys-Gly) (interchain with G-Cter in SUMO2) cross-link. The C2H2-type 5 zinc finger occupies 498–521 (YKCVVCGKVCDDSGVIRLHMSRIH). The C2H2-type 6 zinc finger occupies 531 to 554 (FWCRTCKKELTRKDTIMAHVTEFH). Residues 606–631 (WQCRICEDMFDSQEYVKQHCMSLASH) form a C2H2-type 7; atypical zinc finger. Residues Lys-632, Lys-647, and Lys-664 each participate in a glycyl lysine isopeptide (Lys-Gly) (interchain with G-Cter in SUMO2) cross-link. The C2H2-type 8 zinc-finger motif lies at 636-659 (YSCAHCRKPFHKIETLYRHCQDEH). The segment at 667–690 (YFCGLCDLIFNVEEAFLSHYEEHH) adopts a C2H2-type 9 zinc-finger fold. Lys-706 participates in a covalent cross-link: Glycyl lysine isopeptide (Lys-Gly) (interchain with G-Cter in SUMO1); alternate. Lys-706 participates in a covalent cross-link: Glycyl lysine isopeptide (Lys-Gly) (interchain with G-Cter in SUMO2); alternate. Glycyl lysine isopeptide (Lys-Gly) (interchain with G-Cter in SUMO2) cross-links involve residues Lys-731 and Lys-748. The C2H2-type 10 zinc-finger motif lies at 753-776 (FRCSLCSATAQNLTDMNTHIHQVH). Residues Lys-777, Lys-779, Lys-790, Lys-817, Lys-827, Lys-832, Lys-843, Lys-845, Lys-852, Lys-951, Lys-992, and Lys-993 each participate in a glycyl lysine isopeptide (Lys-Gly) (interchain with G-Cter in SUMO2) cross-link. The segment at 789–812 (IKCGTCTKAFHDPESAQQHFHRKH) adopts a C2H2-type 11 zinc-finger fold. The interval 1050–1061 (LEEAIRRSLEEM) is important for ubiquitin binding.

It belongs to the krueppel C2H2-type zinc-finger protein family. As to quaternary structure, homooligomer. Interacts (via N-terminal region) with SUMO1. Interacts (via N-terminal region) with SUMO2. Interacts simultaneously with two SUMO2 chains. Identified in a complex with SUMO2 and UBE2I/UBC9, where one ZNF451 interacts with one UBE2I/UBC9 and two SUMO2 chains, one bound to the UBE2I/UBC9 active site and the other to another region of the same UBE2I/UBC9 molecule. Interacts (via C-terminus) with ubiquitin. Interacts (via N-terminal zinc-finger domains) with SMAD4 (via MH2 domain). Interacts with SMAD2 and SMAD3. Identified in a complex that contains at least ZNF451, SMAD2, SMAD3 and SMAD4. Interacts with EP300. Inhibits interaction between EP300 and the SMAD4 complex. Interacts with SIMC1. Post-translationally, sumoylated. Predominantly sumoylated on the N-terminal region that is important for interaction with SUMO1 and SUMO2. Sumoylation is important for localization in nuclear granules; desumoylation leads to diffuse nucleoplasmic location. Autosumoylated (in vitro). Sumoylation enhances E3 SUMO-protein ligase activity.

Its subcellular location is the nucleus. The protein resides in the PML body. The protein localises to the nucleoplasm. Its pathway is protein modification; protein sumoylation. Its function is as follows. E3 SUMO-protein ligase; has a preference for SUMO2 and SUMO3 and facilitates UBE2I/UBC9-mediated sumoylation of target proteins. Plays a role in protein SUMO2 modification in response to stress caused by DNA damage and by proteasome inhibitors (in vitro). Required for MCM4 sumoylation. Has no activity with SUMO1. Preferentially transfers an additional SUMO2 chain onto the SUMO2 consensus site 'Lys-11'. Negatively regulates transcriptional activation mediated by the SMAD4 complex in response to TGF-beta signaling. Inhibits EP300-mediated acetylation of histone H3 at 'Lys-9'. Plays a role in regulating the transcription of AR targets. The chain is E3 SUMO-protein ligase ZNF451 (ZNF451) from Homo sapiens (Human).